A 250-amino-acid polypeptide reads, in one-letter code: Triosephosphate isomerase (250 aa).

8-10 (NWK) serves as a coordination point for substrate. The active-site Electrophile is His-96. Residue Glu-169 is the Proton acceptor of the active site. Substrate contacts are provided by residues Gly-175, Ser-214, and 235–236 (GG).

It belongs to the triosephosphate isomerase family. As to quaternary structure, homodimer.

The protein resides in the cytoplasm. The enzyme catalyses D-glyceraldehyde 3-phosphate = dihydroxyacetone phosphate. Its pathway is carbohydrate biosynthesis; gluconeogenesis. The protein operates within carbohydrate degradation; glycolysis; D-glyceraldehyde 3-phosphate from glycerone phosphate: step 1/1. Its function is as follows. Involved in the gluconeogenesis. Catalyzes stereospecifically the conversion of dihydroxyacetone phosphate (DHAP) to D-glyceraldehyde-3-phosphate (G3P). This chain is Triosephosphate isomerase, found in Oleidesulfovibrio alaskensis (strain ATCC BAA-1058 / DSM 17464 / G20) (Desulfovibrio alaskensis).